We begin with the raw amino-acid sequence, 185 residues long: Ribosome-recycling factor (185 aa).

A disordered region spans residues 138-185 (ALKKQEKDGEITEDEERRLEKEVQKVTDESTKKIDQMADNKRKEIIQG).

The protein belongs to the RRF family.

The protein localises to the cytoplasm. In terms of biological role, responsible for the release of ribosomes from messenger RNA at the termination of protein biosynthesis. May increase the efficiency of translation by recycling ribosomes from one round of translation to another. The protein is Ribosome-recycling factor of Lactobacillus delbrueckii subsp. bulgaricus (strain ATCC 11842 / DSM 20081 / BCRC 10696 / JCM 1002 / NBRC 13953 / NCIMB 11778 / NCTC 12712 / WDCM 00102 / Lb 14).